A 303-amino-acid polypeptide reads, in one-letter code: Geranylgeranyl pyrophosphate synthase (303 aa).

Residues Lys-30, Arg-33, and His-62 each contribute to the isopentenyl diphosphate site. Positions 69 and 73 each coordinate Mg(2+). Arg-78 is a dimethylallyl diphosphate binding site. Position 79 (Arg-79) interacts with isopentenyl diphosphate. 5 residues coordinate dimethylallyl diphosphate: Lys-156, Thr-157, Gln-190, Lys-207, and Lys-217.

This sequence belongs to the FPP/GGPP synthase family. Requires Mg(2+) as cofactor.

It is found in the cytoplasm. The catalysed reaction is isopentenyl diphosphate + dimethylallyl diphosphate = (2E)-geranyl diphosphate + diphosphate. The enzyme catalyses isopentenyl diphosphate + (2E)-geranyl diphosphate = (2E,6E)-farnesyl diphosphate + diphosphate. It carries out the reaction isopentenyl diphosphate + (2E,6E)-farnesyl diphosphate = (2E,6E,10E)-geranylgeranyl diphosphate + diphosphate. The protein operates within isoprenoid biosynthesis; farnesyl diphosphate biosynthesis; farnesyl diphosphate from geranyl diphosphate and isopentenyl diphosphate: step 1/1. Its pathway is isoprenoid biosynthesis; geranyl diphosphate biosynthesis; geranyl diphosphate from dimethylallyl diphosphate and isopentenyl diphosphate: step 1/1. It participates in isoprenoid biosynthesis; geranylgeranyl diphosphate biosynthesis; geranylgeranyl diphosphate from farnesyl diphosphate and isopentenyl diphosphate: step 1/1. Functionally, catalyzes the trans-addition of the three molecules of IPP onto DMAPP to form geranylgeranyl pyrophosphate. This is Geranylgeranyl pyrophosphate synthase from Mucor circinelloides f. lusitanicus (Mucor racemosus var. lusitanicus).